We begin with the raw amino-acid sequence, 254 residues long: Hydroxypyruvate/pyruvate aldolase (254 aa).

The active-site Proton acceptor is H47. The a divalent metal cation site is built by E151 and D177.

This sequence belongs to the HpcH/HpaI aldolase family. The cofactor is a divalent metal cation.

It carries out the reaction D-glyceraldehyde + pyruvate = 2-dehydro-3-deoxy-L-galactonate. Aldolase which can catalyze in vitro the aldolisation reaction between hydroxypyruvate (HPA) or pyruvate (PA) and D-glyceraldehyde (D-GA). The condensation of pyruvate and D-glyceraldehyde produces 2-dehydro-3-deoxy-L-galactonate as the major product. Has weak activity with hydroxypyruvate and D-glyceraldehyde. The chain is Hydroxypyruvate/pyruvate aldolase from Chromohalobacter salexigens (strain ATCC BAA-138 / DSM 3043 / CIP 106854 / NCIMB 13768 / 1H11).